Reading from the N-terminus, the 279-residue chain is Thymidylate synthase (279 aa).

Arg21 contacts dUMP. His51 provides a ligand contact to (6R)-5,10-methylene-5,6,7,8-tetrahydrofolate. DUMP is bound at residue Arg126–Arg127. The Nucleophile role is filled by Cys159. Residues Arg179–Asp182, Asn190, and His220–Tyr222 each bind dUMP. Asp182 contacts (6R)-5,10-methylene-5,6,7,8-tetrahydrofolate. Ala278 provides a ligand contact to (6R)-5,10-methylene-5,6,7,8-tetrahydrofolate.

The protein belongs to the thymidylate synthase family. Bacterial-type ThyA subfamily. Homodimer.

It localises to the cytoplasm. It carries out the reaction dUMP + (6R)-5,10-methylene-5,6,7,8-tetrahydrofolate = 7,8-dihydrofolate + dTMP. The protein operates within pyrimidine metabolism; dTTP biosynthesis. Its function is as follows. Catalyzes the reductive methylation of 2'-deoxyuridine-5'-monophosphate (dUMP) to 2'-deoxythymidine-5'-monophosphate (dTMP) while utilizing 5,10-methylenetetrahydrofolate (mTHF) as the methyl donor and reductant in the reaction, yielding dihydrofolate (DHF) as a by-product. This enzymatic reaction provides an intracellular de novo source of dTMP, an essential precursor for DNA biosynthesis. This Marinobacter nauticus (strain ATCC 700491 / DSM 11845 / VT8) (Marinobacter aquaeolei) protein is Thymidylate synthase.